The primary structure comprises 343 residues: Ribosomal RNA small subunit methyltransferase C (343 aa).

Belongs to the methyltransferase superfamily. RsmC family. In terms of assembly, monomer.

It is found in the cytoplasm. It catalyses the reaction guanosine(1207) in 16S rRNA + S-adenosyl-L-methionine = N(2)-methylguanosine(1207) in 16S rRNA + S-adenosyl-L-homocysteine + H(+). In terms of biological role, specifically methylates the guanine in position 1207 of 16S rRNA in the 30S particle. The sequence is that of Ribosomal RNA small subunit methyltransferase C from Escherichia coli (strain SMS-3-5 / SECEC).